The primary structure comprises 264 residues: Glutamate racemase 2 (264 aa).

Residues 10–11 (DS) and 42–43 (YG) contribute to the substrate site. C73 functions as the Proton donor/acceptor in the catalytic mechanism. Residue 74–75 (NT) participates in substrate binding. C181 (proton donor/acceptor) is an active-site residue. 182–183 (TH) lines the substrate pocket.

The protein belongs to the aspartate/glutamate racemases family.

The catalysed reaction is L-glutamate = D-glutamate. It functions in the pathway cell wall biogenesis; peptidoglycan biosynthesis. Its function is as follows. Provides the (R)-glutamate required for cell wall biosynthesis. The polypeptide is Glutamate racemase 2 (Caldanaerobacter subterraneus subsp. tengcongensis (strain DSM 15242 / JCM 11007 / NBRC 100824 / MB4) (Thermoanaerobacter tengcongensis)).